Consider the following 440-residue polypeptide: V-type ATP synthase beta chain (440 aa).

The protein belongs to the ATPase alpha/beta chains family.

Its function is as follows. Produces ATP from ADP in the presence of a proton gradient across the membrane. The V-type beta chain is a regulatory subunit. The polypeptide is V-type ATP synthase beta chain (Geotalea uraniireducens (strain Rf4) (Geobacter uraniireducens)).